The following is a 421-amino-acid chain: MDKLIITGGIRLDGEIRISGAKNSALPILAATLLADTPVTVCNLPHLHDITTMIELFGRMGVQPIIDEKLSVEVDASSIKTLVAPYELVKTMRASILVLGPMVARFGEAEVALPGGCAIGSRPVDLHIRGLEAMGAKIDVEGGYIKAKAPAGGLRGAHFFFDTVSVTGTENIMMAAALANGRSVLENAAREPEVVDLANFLNAMGAKVSGAGTDTIVIDGVKRLGGGRYSVMPDRIETGTYLVAAAATGGRVRLKDTDATLLEAVLHKLVEAGAHIDTGSDWIELDMKGKRPKAVNVRTAPYPAFPTDMQAQFIALNAIAEGTGTVIETVFENRFMHVYEMNRMGAQILVEGNTAIVTGVDHLKGAPVMATDLRASASLVIAGLVAEGDTLIDRIYHIDRGYECIEEKLQLLGAKIRRVPG.

22-23 (KN) contributes to the phosphoenolpyruvate binding site. Position 93 (Arg-93) interacts with UDP-N-acetyl-alpha-D-glucosamine. Cys-117 acts as the Proton donor in catalysis. Cys-117 carries the post-translational modification 2-(S-cysteinyl)pyruvic acid O-phosphothioketal. Residues 122 to 126 (RPVDL), Asp-308, and Val-330 each bind UDP-N-acetyl-alpha-D-glucosamine.

Belongs to the EPSP synthase family. MurA subfamily.

It is found in the cytoplasm. The catalysed reaction is phosphoenolpyruvate + UDP-N-acetyl-alpha-D-glucosamine = UDP-N-acetyl-3-O-(1-carboxyvinyl)-alpha-D-glucosamine + phosphate. The protein operates within cell wall biogenesis; peptidoglycan biosynthesis. Cell wall formation. Adds enolpyruvyl to UDP-N-acetylglucosamine. The protein is UDP-N-acetylglucosamine 1-carboxyvinyltransferase of Stutzerimonas stutzeri (strain A1501) (Pseudomonas stutzeri).